The sequence spans 424 residues: Gamma-glutamyl phosphate reductase (424 aa).

The interval 1-27 is disordered; it reads MSVEAQSRSGAVDTQEPADLREQVHSA.

It belongs to the gamma-glutamyl phosphate reductase family.

Its subcellular location is the cytoplasm. It catalyses the reaction L-glutamate 5-semialdehyde + phosphate + NADP(+) = L-glutamyl 5-phosphate + NADPH + H(+). The protein operates within amino-acid biosynthesis; L-proline biosynthesis; L-glutamate 5-semialdehyde from L-glutamate: step 2/2. Its function is as follows. Catalyzes the NADPH-dependent reduction of L-glutamate 5-phosphate into L-glutamate 5-semialdehyde and phosphate. The product spontaneously undergoes cyclization to form 1-pyrroline-5-carboxylate. The protein is Gamma-glutamyl phosphate reductase of Mycolicibacterium smegmatis (strain ATCC 700084 / mc(2)155) (Mycobacterium smegmatis).